Here is a 64-residue protein sequence, read N- to C-terminus: Large ribosomal subunit protein bL35 (64 aa).

It belongs to the bacterial ribosomal protein bL35 family.

This Ureaplasma parvum serovar 3 (strain ATCC 27815 / 27 / NCTC 11736) protein is Large ribosomal subunit protein bL35.